Consider the following 640-residue polypeptide: 1,4-alpha-glucan branching enzyme GlgB (640 aa).

Residue Asp-318 is the Nucleophile of the active site. Glu-371 (proton donor) is an active-site residue.

It belongs to the glycosyl hydrolase 13 family. GlgB subfamily. Monomer.

It carries out the reaction Transfers a segment of a (1-&gt;4)-alpha-D-glucan chain to a primary hydroxy group in a similar glucan chain.. Its pathway is glycan biosynthesis; glycogen biosynthesis. In terms of biological role, catalyzes the formation of the alpha-1,6-glucosidic linkages in glycogen by scission of a 1,4-alpha-linked oligosaccharide from growing alpha-1,4-glucan chains and the subsequent attachment of the oligosaccharide to the alpha-1,6 position. The sequence is that of 1,4-alpha-glucan branching enzyme GlgB from Francisella tularensis subsp. holarctica (strain LVS).